The sequence spans 808 residues: Spindle assembly abnormal protein 4 (808 aa).

The interval 1-151 (MASDENIGAD…PDEPSTLVNS (151 aa)) is disordered. The segment covering 42 to 54 (PPTSELSSASSPS) has biased composition (low complexity). Polar residues-rich tracts occupy residues 61–78 (SLSN…SGIS) and 85–104 (PPTT…SPEN). A compositionally biased stretch (basic and acidic residues) spans 113 to 123 (AEEHGHSGQHA). The segment covering 124–133 (EEEEDNDTDE) has biased composition (acidic residues). The stretch at 161–181 (KYKNAAAEFKAFERRMDSMRS) forms a coiled coil. Disordered regions lie at residues 187–206 (TSLA…PPTR) and 271–298 (VTAP…DENR). Over residues 280–294 (MMNSSRQNPQNGNVQ) the composition is skewed to polar residues. Positions 314–503 (LDRQKLEIEI…ERDDKEKEMF (190 aa)) form a coiled coil. The segment covering 511–529 (KTSNPVPPVLNQSVPISIT) has biased composition (polar residues). The segment at 511-564 (KTSNPVPPVLNQSVPISITSNGPSRHPSSSSLTTFRKPSTSNRERGVSWADEPN) is disordered. A compositionally biased stretch (low complexity) spans 530–541 (SNGPSRHPSSSS). Residues 542–551 (LTTFRKPSTS) show a composition bias toward polar residues.

Interacts with hyls-1; leading to hyls-1 localization into newly forming centrioles.

It is found in the cytoplasm. It localises to the cytoskeleton. The protein localises to the microtubule organizing center. Its subcellular location is the centrosome. Functionally, required for centrosome duplication. Plays a central role in determining centrosome size. This is Spindle assembly abnormal protein 4 (sas-4) from Caenorhabditis elegans.